Here is a 330-residue protein sequence, read N- to C-terminus: MRHSVLFATAFATLISTQTFAADLPGKGITVNPVQSTITEETFQTLLVSRALEKLGYTVNKPSEVDYNVGYTSLASGDATFTAVNWTPLHDNMYEAAGGDKKFYREGVFVNGAAQGYLIDKKTADQYKITNIAQLKDPKIAKLFDTNGDGKADLTGCNPGWGCEGAINHQLAAYELTNTVTHNQGNYAAMMADTISRYKEGKPVFYYTWTPYWVSNELKPGKDVVWLQVPFSALPGDKNADTKLPNGANYGFPVSTMHIVANKAWAEKNPAAAKLFAIMQLPVADINAQNAIMHDGKASEGDIQGHVDGWIKAHQQQFDGWVNEALAAQK.

Residues M1 to A21 form the signal peptide. Substrate is bound by residues W86, H90, and W161–C163. A disulfide bond links C157 and C163.

As to quaternary structure, the complex is composed of two ATP-binding proteins (ProV), two transmembrane proteins (ProW) and a solute-binding protein (ProX).

Its subcellular location is the periplasm. In terms of biological role, part of the ProU ABC transporter complex involved in glycine betaine and proline betaine uptake. Binds glycine betaine and proline betaine with high affinity. This is Glycine betaine/proline betaine-binding periplasmic protein from Escherichia coli (strain K12).